The primary structure comprises 388 residues: UPF0229 protein BH1031 (388 aa).

Residues 80–117 (HVGQGDGDSQVGDVIARDPSAGQQGPGKGQGAGDQPGE) form a disordered region. Positions 103-113 (QGPGKGQGAGD) are enriched in gly residues.

It belongs to the UPF0229 family.

This chain is UPF0229 protein BH1031, found in Halalkalibacterium halodurans (strain ATCC BAA-125 / DSM 18197 / FERM 7344 / JCM 9153 / C-125) (Bacillus halodurans).